Consider the following 1577-residue polypeptide: Disco-interacting protein 2 homolog B-A (1577 aa).

In terms of domain architecture, DMAP1-binding spans D7–F124. Disordered regions lie at residues E109–R148, V173–T204, D217–S239, and S253–R273. Over residues F124–A140 the composition is skewed to polar residues. Residues S176–S187 are compositionally biased toward low complexity. Over residues D217–D236 the composition is skewed to polar residues.

Belongs to the DIP2 family.

Its subcellular location is the cell projection. It localises to the dendrite. It is found in the axon. The protein localises to the perikaryon. Negatively regulates axonal outgrowth and is essential for normal synaptic transmission. Not required for regulation of axon polarity. Promotes acetylation of alpha-tubulin. The chain is Disco-interacting protein 2 homolog B-A (dip2ba) from Danio rerio (Zebrafish).